The following is a 344-amino-acid chain: Follistatin (344 aa).

The signal sequence occupies residues 1-29 (MVRARHQPGGLCLLLLLLCQFMEDRSAQA). The TB domain occupies 30-103 (GNCWLRQAKN…TCENVDCGPG (74 aa)). Intrachain disulfides connect C32/C55, C42/C88, C56/C91, C95/C106, C100/C116, C118/C150, C122/C143, C132/C164, C168/C179, C173/C189, C192/C225, C196/C218, C207/C239, C245/C256, C250/C267, C270/C302, C274/C295, and C284/C316. The region spanning 94–117 (TCENVDCGPGKKCRMNKKNKPRCV) is the Follistatin-like 1 domain. The Kazal-like 1 domain occupies 112–166 (NKPRCVCAPDCSNITWKGPVCGLDGKTYRNECALLKARCKEQPELEVQYQGRCKK). N124 carries N-linked (GlcNAc...) asparagine glycosylation. The region spanning 167–190 (TCRDVFCPGSSTCVVDQTNNAYCV) is the Follistatin-like 2 domain. The region spanning 186–241 (NAYCVTCNRICPEPASSEQYLCGNDGVTYSSACHLRKATCLLGRSIGLAYEGKCIK) is the Kazal-like 2 domain. One can recognise a Follistatin-like 3 domain in the interval 244 to 268 (SCEDIQCTGGKKCLWDFKVGRGRCS). Positions 264–318 (RGRCSLCDELCPDSKSDEPVCASDNATYASECAMKEAACSSGVLLEVKHSGSCNS) constitute a Kazal-like 3 domain. N288 is a glycosylation site (N-linked (GlcNAc...) asparagine). The disordered stretch occupies residues 314 to 344 (GSCNSISEDTEEEEEDEDQDYSFPISSILEW). Residues 321 to 333 (EDTEEEEEDEDQD) are compositionally biased toward acidic residues.

In terms of assembly, interacts with GDF11. Interacts with activin A/INHBA. Interacts with MYOSTATIN/MSTN. Isoform 1 is the predominant isoform in serum but is undetectable in follicular fluid. In the embryo, strong expression is seen in the palatal epithelia, including the medial edge epithelial and midline epithelial seam of the palatal shelves. Less pronounced expression is also seen throughout the palatal shelf and tongue mesenchyme.

It localises to the secreted. It is found in the nucleus. The protein localises to the nucleolus. Multifunctional regulatory protein whose primary function is to antagonize members of the transforming growth factor beta (TGF-beta) superfamily including activin, myostatin, GDF11 or bone morphogenetic proteins (BMPs). Mechanistically, binds to these ligands in the extracellular space, blocking their type II receptor-binding site to inhibit downstream signaling. Plays an essential role in muscle fiber formation and growth both by preventing the repressive effects of myostatin and through SMAD3/AKT/mTOR signaling independently of myostatin. Also promotes neural differentiation by antagonizing the action BMP4. Acts as a specific inhibitor of the biosynthesis and secretion of pituitary follicle stimulating hormone (FSH) by sequestering activin A/INHBA. On the other hand, translocates into the nucleus where it down-regulates rRNA synthesis and ribosome biogenesis to maintain cellular energy homeostasis by binding to rDNA. This Homo sapiens (Human) protein is Follistatin.